Consider the following 275-residue polypeptide: Large ribosomal subunit protein uL2 (275 aa).

Disordered regions lie at residues 38 to 59 (KKHA…GGHK) and 222 to 275 (GSAM…RKQK). Basic residues-rich tracts occupy residues 39–59 (KHAG…GGHK) and 254–275 (MGKK…RKQK).

The protein belongs to the universal ribosomal protein uL2 family. As to quaternary structure, part of the 50S ribosomal subunit. Forms a bridge to the 30S subunit in the 70S ribosome.

Its function is as follows. One of the primary rRNA binding proteins. Required for association of the 30S and 50S subunits to form the 70S ribosome, for tRNA binding and peptide bond formation. It has been suggested to have peptidyltransferase activity; this is somewhat controversial. Makes several contacts with the 16S rRNA in the 70S ribosome. This is Large ribosomal subunit protein uL2 from Herpetosiphon aurantiacus (strain ATCC 23779 / DSM 785 / 114-95).